We begin with the raw amino-acid sequence, 260 residues long: Triosephosphate isomerase (260 aa).

11 to 13 serves as a coordination point for substrate; the sequence is NWK. His103 acts as the Electrophile in catalysis. The Proton acceptor role is filled by Glu175. Residues Gly181, Ser220, and 241–242 each bind substrate; that span reads GG.

This sequence belongs to the triosephosphate isomerase family. In terms of assembly, homodimer.

The protein resides in the cytoplasm. It catalyses the reaction D-glyceraldehyde 3-phosphate = dihydroxyacetone phosphate. It functions in the pathway carbohydrate biosynthesis; gluconeogenesis. The protein operates within carbohydrate degradation; glycolysis; D-glyceraldehyde 3-phosphate from glycerone phosphate: step 1/1. Its function is as follows. Involved in the gluconeogenesis. Catalyzes stereospecifically the conversion of dihydroxyacetone phosphate (DHAP) to D-glyceraldehyde-3-phosphate (G3P). The protein is Triosephosphate isomerase of Shewanella halifaxensis (strain HAW-EB4).